Consider the following 339-residue polypeptide: DNA-directed RNA polymerase subunit alpha (339 aa).

The segment at 1-233 is alpha N-terminal domain (alpha-NTD); it reads MVREEITGST…DLFLPFLHTE (233 aa). The segment at 264 to 339 is alpha C-terminal domain (alpha-CTD); that stretch reads KKGIPLNCIF…IDLPKNKFSL (76 aa).

Belongs to the RNA polymerase alpha chain family. In plastids the minimal PEP RNA polymerase catalytic core is composed of four subunits: alpha, beta, beta', and beta''. When a (nuclear-encoded) sigma factor is associated with the core the holoenzyme is formed, which can initiate transcription.

The protein resides in the plastid. It is found in the chloroplast. The enzyme catalyses RNA(n) + a ribonucleoside 5'-triphosphate = RNA(n+1) + diphosphate. In terms of biological role, DNA-dependent RNA polymerase catalyzes the transcription of DNA into RNA using the four ribonucleoside triphosphates as substrates. The sequence is that of DNA-directed RNA polymerase subunit alpha from Zea mays (Maize).